We begin with the raw amino-acid sequence, 137 residues long: Basic phospholipase A2 PeBP(R)-I/II (137 aa).

The signal sequence occupies residues 1–16 (MRTLWIMAVLLLGVEG). Intrachain disulfides connect cysteine 42/cysteine 131, cysteine 44/cysteine 60, cysteine 59/cysteine 111, cysteine 65/cysteine 137, cysteine 66/cysteine 104, cysteine 73/cysteine 97, and cysteine 91/cysteine 102. Residue histidine 63 is part of the active site. The active site involves aspartate 105.

The protein belongs to the phospholipase A2 family. Group II subfamily. R49 sub-subfamily. As to expression, expressed by the venom gland.

It is found in the secreted. It carries out the reaction a 1,2-diacyl-sn-glycero-3-phosphocholine + H2O = a 1-acyl-sn-glycero-3-phosphocholine + a fatty acid + H(+). Its function is as follows. Snake venom phospholipases A2 that have myotoxic, and edema-inducing activity, as well as extremely weak lipolytic activity. PLA2 catalyzes the calcium-dependent hydrolysis of the 2-acyl groups in 3-sn-phosphoglycerides. This chain is Basic phospholipase A2 PeBP(R)-I/II, found in Protobothrops elegans (Elegant pitviper).